The sequence spans 151 residues: Large-conductance mechanosensitive channel (151 aa).

The next 2 membrane-spanning stretches (helical) occupy residues 14 to 34 and 85 to 105; these read VVDM…VNSL and GLFV…FLLV.

It belongs to the MscL family. In terms of assembly, homopentamer.

It is found in the cell inner membrane. Its function is as follows. Channel that opens in response to stretch forces in the membrane lipid bilayer. May participate in the regulation of osmotic pressure changes within the cell. The sequence is that of Large-conductance mechanosensitive channel from Chlorobaculum tepidum (strain ATCC 49652 / DSM 12025 / NBRC 103806 / TLS) (Chlorobium tepidum).